Reading from the N-terminus, the 204-residue chain is Guanylate kinase (204 aa).

Residues 5–184 enclose the Guanylate kinase-like domain; that stretch reads GLLLVLSGPS…AVDHIKSIVE (180 aa). 12–19 is a binding site for ATP; it reads GPSGVGKG.

Belongs to the guanylate kinase family.

The protein localises to the cytoplasm. The enzyme catalyses GMP + ATP = GDP + ADP. In terms of biological role, essential for recycling GMP and indirectly, cGMP. The sequence is that of Guanylate kinase from Lactobacillus johnsonii (strain CNCM I-12250 / La1 / NCC 533).